The primary structure comprises 418 residues: Probable aminotransferase Rv1178 (418 aa).

The disordered stretch occupies residues 22-42; that stretch reads GQGWHDRERPASGQGSGAAER.

It belongs to the class-I pyridoxal-phosphate-dependent aminotransferase family. Pyridoxal 5'-phosphate serves as cofactor.

The chain is Probable aminotransferase Rv1178 from Mycobacterium tuberculosis (strain ATCC 25618 / H37Rv).